The sequence spans 397 residues: Elongation factor Tu (397 aa).

The tr-type G domain maps to 10 to 207 (LPHVNVGTIG…TLDSYIPEPE (198 aa)). Residues 19–26 (GHVDHGKT) are G1. Position 19-26 (19-26 (GHVDHGKT)) interacts with GTP. Residue Thr26 coordinates Mg(2+). Residues 60–64 (GITIN) are G2. Residues 81–84 (DCPG) are G3. Residues 81-85 (DCPGH) and 136-139 (NKAD) each bind GTP. Residues 136–139 (NKAD) form a G4 region. The tract at residues 174–176 (SAR) is G5.

The protein belongs to the TRAFAC class translation factor GTPase superfamily. Classic translation factor GTPase family. EF-Tu/EF-1A subfamily. In terms of assembly, monomer.

Its subcellular location is the cytoplasm. It catalyses the reaction GTP + H2O = GDP + phosphate + H(+). GTP hydrolase that promotes the GTP-dependent binding of aminoacyl-tRNA to the A-site of ribosomes during protein biosynthesis. This is Elongation factor Tu from Pseudomonas fluorescens (strain Pf0-1).